The following is a 292-amino-acid chain: tRNA-cytidine(32) 2-sulfurtransferase (292 aa).

Positions 53–58 (SGGKDS) match the PP-loop motif motif. 3 residues coordinate [4Fe-4S] cluster: cysteine 128, cysteine 131, and cysteine 219.

It belongs to the TtcA family. In terms of assembly, homodimer. The cofactor is Mg(2+). [4Fe-4S] cluster serves as cofactor.

It localises to the cytoplasm. It catalyses the reaction cytidine(32) in tRNA + S-sulfanyl-L-cysteinyl-[cysteine desulfurase] + AH2 + ATP = 2-thiocytidine(32) in tRNA + L-cysteinyl-[cysteine desulfurase] + A + AMP + diphosphate + H(+). It participates in tRNA modification. In terms of biological role, catalyzes the ATP-dependent 2-thiolation of cytidine in position 32 of tRNA, to form 2-thiocytidine (s(2)C32). The sulfur atoms are provided by the cysteine/cysteine desulfurase (IscS) system. This Cereibacter sphaeroides (strain ATCC 17029 / ATH 2.4.9) (Rhodobacter sphaeroides) protein is tRNA-cytidine(32) 2-sulfurtransferase.